Here is a 406-residue protein sequence, read N- to C-terminus: 4-hydroxy-3-methylbut-2-en-1-yl diphosphate synthase (flavodoxin) (406 aa).

Residues C297, C300, C343, and E350 each coordinate [4Fe-4S] cluster.

The protein belongs to the IspG family. As to quaternary structure, homodimer. The cofactor is [4Fe-4S] cluster.

It catalyses the reaction (2E)-4-hydroxy-3-methylbut-2-enyl diphosphate + oxidized [flavodoxin] + H2O + 2 H(+) = 2-C-methyl-D-erythritol 2,4-cyclic diphosphate + reduced [flavodoxin]. The protein operates within isoprenoid biosynthesis; isopentenyl diphosphate biosynthesis via DXP pathway; isopentenyl diphosphate from 1-deoxy-D-xylulose 5-phosphate: step 5/6. Functionally, converts 2C-methyl-D-erythritol 2,4-cyclodiphosphate (ME-2,4cPP) into 1-hydroxy-2-methyl-2-(E)-butenyl 4-diphosphate. The sequence is that of 4-hydroxy-3-methylbut-2-en-1-yl diphosphate synthase (flavodoxin) from Thermus thermophilus (strain ATCC BAA-163 / DSM 7039 / HB27).